Consider the following 472-residue polypeptide: GTPase Der (472 aa).

EngA-type G domains follow at residues 3-166 and 188-361; these read PIIA…IQNN and IKLA…HCST. GTP contacts are provided by residues 9 to 16, 56 to 60, 118 to 121, 194 to 201, 241 to 245, and 306 to 309; these read GRPNVGKS, DTGGI, NKID, GSSNVGKS, DTAGL, and NKWD. The 85-residue stretch at 362-446 folds into the KH-like domain; it reads KRISTALLTK…PIRIQFNEPA (85 aa).

The protein belongs to the TRAFAC class TrmE-Era-EngA-EngB-Septin-like GTPase superfamily. EngA (Der) GTPase family. As to quaternary structure, associates with the 50S ribosomal subunit.

Its function is as follows. GTPase that plays an essential role in the late steps of ribosome biogenesis. This is GTPase Der from Baumannia cicadellinicola subsp. Homalodisca coagulata.